The following is a 256-amino-acid chain: Ribonuclease 3 (256 aa).

Residues 3 to 125 (LDALQQRLGY…IVGAVFLDAG (123 aa)) form the RNase III domain. Residue Glu-38 participates in Mg(2+) binding. Asp-42 is a catalytic residue. Mg(2+) contacts are provided by Asp-111 and Glu-114. Glu-114 is an active-site residue. Residues 152-222 (DAKTLLQEYL…AKLALDEVQK (71 aa)) enclose the DRBM domain. The tract at residues 230-256 (RSRAERTGKTRKQPVPQDPQLSLRLKE) is disordered.

This sequence belongs to the ribonuclease III family. Homodimer. Mg(2+) serves as cofactor.

The protein resides in the cytoplasm. The enzyme catalyses Endonucleolytic cleavage to 5'-phosphomonoester.. Digests double-stranded RNA. Involved in the processing of primary rRNA transcript to yield the immediate precursors to the large and small rRNAs (23S and 16S). Processes some mRNAs, and tRNAs when they are encoded in the rRNA operon. Processes pre-crRNA and tracrRNA of type II CRISPR loci if present in the organism. The sequence is that of Ribonuclease 3 from Cupriavidus necator (strain ATCC 17699 / DSM 428 / KCTC 22496 / NCIMB 10442 / H16 / Stanier 337) (Ralstonia eutropha).